Consider the following 368-residue polypeptide: Probable endopolygalacturonase I (368 aa).

The signal sequence occupies residues 1 to 18; it reads MHSFQLLGLAALGSLVAA. Positions 19-31 are excised as a propeptide; it reads APSPSRVSDLTER. A disulfide bridge connects residues Cys35 and Cys50. PbH1 repeat units follow at residues 162–192, 193–214, 215–235, 244–265, 273–295, and 307–328; these read ANNL…DISE, SNGV…AINS, GKNI…SIGS, VQGV…RIKT, VSDV…VIQQ, and SNGI…DSKA. Asp207 functions as the Proton donor in the catalytic mechanism. Cys209 and Cys225 are disulfide-bonded. His229 is an active-site residue. 2 disulfide bridges follow: Cys335-Cys340 and Cys359-Cys368.

It belongs to the glycosyl hydrolase 28 family.

The protein localises to the secreted. The catalysed reaction is (1,4-alpha-D-galacturonosyl)n+m + H2O = (1,4-alpha-D-galacturonosyl)n + (1,4-alpha-D-galacturonosyl)m.. In terms of biological role, involved in maceration and soft-rotting of plant tissue. Hydrolyzes the 1,4-alpha glycosidic bonds of de-esterified pectate in the smooth region of the plant cell wall. This Aspergillus terreus (strain NIH 2624 / FGSC A1156) protein is Probable endopolygalacturonase I (pgaI).